Reading from the N-terminus, the 572-residue chain is Proline--tRNA ligase (572 aa).

This sequence belongs to the class-II aminoacyl-tRNA synthetase family. ProS type 1 subfamily. Homodimer.

It localises to the cytoplasm. It catalyses the reaction tRNA(Pro) + L-proline + ATP = L-prolyl-tRNA(Pro) + AMP + diphosphate. Functionally, catalyzes the attachment of proline to tRNA(Pro) in a two-step reaction: proline is first activated by ATP to form Pro-AMP and then transferred to the acceptor end of tRNA(Pro). As ProRS can inadvertently accommodate and process non-cognate amino acids such as alanine and cysteine, to avoid such errors it has two additional distinct editing activities against alanine. One activity is designated as 'pretransfer' editing and involves the tRNA(Pro)-independent hydrolysis of activated Ala-AMP. The other activity is designated 'posttransfer' editing and involves deacylation of mischarged Ala-tRNA(Pro). The misacylated Cys-tRNA(Pro) is not edited by ProRS. This Salmonella dublin (strain CT_02021853) protein is Proline--tRNA ligase.